The chain runs to 88 residues: Small ribosomal subunit protein uS17 (88 aa).

Belongs to the universal ribosomal protein uS17 family. As to quaternary structure, part of the 30S ribosomal subunit.

In terms of biological role, one of the primary rRNA binding proteins, it binds specifically to the 5'-end of 16S ribosomal RNA. In Pseudomonas fluorescens (strain ATCC BAA-477 / NRRL B-23932 / Pf-5), this protein is Small ribosomal subunit protein uS17.